Reading from the N-terminus, the 250-residue chain is Hydroxyacylglutathione hydrolase (250 aa).

7 residues coordinate Zn(2+): His53, His55, Asp57, His58, His111, Asp128, and His166.

This sequence belongs to the metallo-beta-lactamase superfamily. Glyoxalase II family. Monomer. Requires Zn(2+) as cofactor.

It catalyses the reaction an S-(2-hydroxyacyl)glutathione + H2O = a 2-hydroxy carboxylate + glutathione + H(+). The protein operates within secondary metabolite metabolism; methylglyoxal degradation; (R)-lactate from methylglyoxal: step 2/2. Functionally, thiolesterase that catalyzes the hydrolysis of S-D-lactoyl-glutathione to form glutathione and D-lactic acid. The sequence is that of Hydroxyacylglutathione hydrolase from Methylobacillus flagellatus (strain ATCC 51484 / DSM 6875 / VKM B-1610 / KT).